Reading from the N-terminus, the 167-residue chain is Large ribosomal subunit protein uL22 (167 aa).

Residues Gly120–Arg167 are disordered. The segment covering Lys134–Arg167 has biased composition (basic residues).

It belongs to the universal ribosomal protein uL22 family. As to quaternary structure, part of the 50S ribosomal subunit.

Its function is as follows. This protein binds specifically to 23S rRNA; its binding is stimulated by other ribosomal proteins, e.g. L4, L17, and L20. It is important during the early stages of 50S assembly. It makes multiple contacts with different domains of the 23S rRNA in the assembled 50S subunit and ribosome. The globular domain of the protein is located near the polypeptide exit tunnel on the outside of the subunit, while an extended beta-hairpin is found that lines the wall of the exit tunnel in the center of the 70S ribosome. In Koribacter versatilis (strain Ellin345), this protein is Large ribosomal subunit protein uL22.